The primary structure comprises 434 residues: MSFNTLIDWNSCSPEQQRALLTRPAISASDSITRTVSDILYNVKTRGDDALREYSAKFDKTEVTALRVTPEEIAAAGARLSDELKQAMAAAVKNIETFHSAQTLPPVDVETQPGVRCQQVTRPVASVGLYIPGGSAPLFSTVLMLATPARIAGCQKVVLCSPPPIADEILYAAQLCGVQEIFNVGGAQAIAALAFGSESVPKVDKIFGPGNAFVTEAKRQVSQRLDGAAIDMPAGPSEVLVIADSGATPDFVASDLLSQAEHGPDSQVILLTPDADIARKVAEAVERQLAELPRAGTARQALSASRLIVTKDLAQCVAISNQYGPEHLIIQTRNARDLVDAITSAGSVFLGDWSPESAGDYASGTNHVLPTYGYTATCSSLGLADFQKRMTVQELSKAGFSALASTIETLAAAERLTAHKNAVTLRVNALKEQA.

The NAD(+) site is built by tyrosine 130, glutamine 188, and asparagine 211. The substrate site is built by serine 237, glutamine 259, and histidine 262. 2 residues coordinate Zn(2+): glutamine 259 and histidine 262. Residues glutamate 326 and histidine 327 each act as proton acceptor in the active site. 4 residues coordinate substrate: histidine 327, aspartate 360, glutamate 414, and histidine 419. Residue aspartate 360 participates in Zn(2+) binding. A Zn(2+)-binding site is contributed by histidine 419.

Belongs to the histidinol dehydrogenase family. As to quaternary structure, homodimer. The cofactor is Zn(2+).

The enzyme catalyses L-histidinol + 2 NAD(+) + H2O = L-histidine + 2 NADH + 3 H(+). It functions in the pathway amino-acid biosynthesis; L-histidine biosynthesis; L-histidine from 5-phospho-alpha-D-ribose 1-diphosphate: step 9/9. Its function is as follows. Catalyzes the sequential NAD-dependent oxidations of L-histidinol to L-histidinaldehyde and then to L-histidine. The sequence is that of Histidinol dehydrogenase from Salmonella typhi.